We begin with the raw amino-acid sequence, 900 residues long: Phosphoenolpyruvate carboxylase (900 aa).

Residues His-140 and Lys-568 contribute to the active site.

It belongs to the PEPCase type 1 family. Requires Mg(2+) as cofactor.

The enzyme catalyses oxaloacetate + phosphate = phosphoenolpyruvate + hydrogencarbonate. In terms of biological role, forms oxaloacetate, a four-carbon dicarboxylic acid source for the tricarboxylic acid cycle. In Neisseria meningitidis serogroup C / serotype 2a (strain ATCC 700532 / DSM 15464 / FAM18), this protein is Phosphoenolpyruvate carboxylase.